The primary structure comprises 115 residues: Con-Ins T2 (115 aa).

An N-terminal signal peptide occupies residues 1–21; sequence MTTSFYFLLVALGLLLYVCQS. Positions 22–29 are excised as a propeptide; it reads SFGNQHTR. 3 disulfide bridges follow: Cys38–Cys101, Cys50–Cys114, and Cys100–Cys105. Position 48 is a 4-carboxyglutamate (Glu48). The propeptide at 53 to 94 is c peptide; sequence KRNDAGKKRGQASPLWQRGGSLSMLKARAKRNEAFHLQRAHR. At Glu98 the chain carries 4-carboxyglutamate. 4-carboxyglutamate is present on Glu109. At Cys114 the chain carries Cysteine amide.

It belongs to the insulin family. In terms of assembly, heterodimer of A and B chains; disulfide-linked. In terms of tissue distribution, expressed by the venom gland.

It localises to the secreted. Functionally, this venom insulin facilitates prey capture by rapidly inducing hypoglycemic shock. It is one of the smallest known insulin found in nature and lacks the C-terminal segment of the B chain that, in human insulin, mediates engagement of the insulin receptor (INSR) and assembly of the hormone's hexameric storage form. Despite lacking this segment, it both binds and activates human insulin receptor (long isoform (HIR-B)) with a high potency (EC(50)=15.5 nM). In vivo, intraperitoneal injection of this peptide into zebrafish lowers blood glucose with a lower potency than human insulin. In addition, when applied to water, this peptide reduces overall locomotor activity of zebrafish larvae, observed as a significant decrease in the percentage of time spent swimming and movement frequency. When tested on a mouse model of diabetes, this insulin also lowers blood glucose with a 10-fold lower potency than human insulin. The protein is Con-Ins T2 of Conus tulipa (Fish-hunting cone snail).